Consider the following 429-residue polypeptide: 3-phosphoshikimate 1-carboxyvinyltransferase (429 aa).

Residues Lys-11, Ser-12, and Arg-16 each contribute to the 3-phosphoshikimate site. Lys-11 serves as a coordination point for phosphoenolpyruvate. 2 residues coordinate phosphoenolpyruvate: Gly-82 and Arg-110. Residues Ser-155, Gln-157, Asp-302, and Lys-329 each coordinate 3-phosphoshikimate. Residue Gln-157 coordinates phosphoenolpyruvate. The active-site Proton acceptor is the Asp-302. The phosphoenolpyruvate site is built by Arg-333 and Arg-385.

It belongs to the EPSP synthase family. As to quaternary structure, monomer.

Its subcellular location is the cytoplasm. It carries out the reaction 3-phosphoshikimate + phosphoenolpyruvate = 5-O-(1-carboxyvinyl)-3-phosphoshikimate + phosphate. The protein operates within metabolic intermediate biosynthesis; chorismate biosynthesis; chorismate from D-erythrose 4-phosphate and phosphoenolpyruvate: step 6/7. In terms of biological role, catalyzes the transfer of the enolpyruvyl moiety of phosphoenolpyruvate (PEP) to the 5-hydroxyl of shikimate-3-phosphate (S3P) to produce enolpyruvyl shikimate-3-phosphate and inorganic phosphate. The chain is 3-phosphoshikimate 1-carboxyvinyltransferase from Helicobacter pylori (strain ATCC 700392 / 26695) (Campylobacter pylori).